Here is a 391-residue protein sequence, read N- to C-terminus: Probable inactive allantoicase (391 aa).

Belongs to the allantoicase family.

The function of this enzyme is unclear as allantoicase activity is not known to exist in mammals. The protein is Probable inactive allantoicase of Homo sapiens (Human).